Reading from the N-terminus, the 210-residue chain is MTTLNVARVYLRVSSEDQDLQRQEAIIGNARESGYYVAAVYREKASGARSDRPELLRMIEDLQPGEVVIAEKIDRISRLPLVEAEKLVDAIRAKGARLAVPGIVDLSQLTEASRGVAKVVLQGVQDMLLRVALQIARDDFEDRRERQRQGIDLAKGAGRYAGRKPDTKMHERVIALKSGGCSIAETARLAGVSVSQVKRVWAQNQTKDKV.

Residues 6–150 (VARVYLRVSS…EDRRERQRQG (145 aa)) enclose the Resolvase/invertase-type recombinase catalytic domain. Ser-14 functions as the O-(5'-phospho-DNA)-serine intermediate in the catalytic mechanism. Positions 191 to 210 (GVSVSQVKRVWAQNQTKDKV) form a DNA-binding region, H-T-H motif.

Belongs to the site-specific recombinase resolvase family.

Site-specific recombination protein. This Pseudomonas syringae pv. tomato protein is Resolvase (stbA).